The sequence spans 138 residues: Acidic phospholipase A2 Drk-a1 (138 aa).

The first 16 residues, 1 to 16, serve as a signal peptide directing secretion; sequence MRTLWIVAVCLIGVEG. Intrachain disulfides connect Cys42/Cys131, Cys44/Cys60, Cys59/Cys111, Cys65/Cys138, Cys66/Cys104, Cys73/Cys97, and Cys91/Cys102. The Ca(2+) site is built by Tyr43, Gly45, and Gly47. Residue His63 is part of the active site. Ca(2+) is bound at residue Asp64. Residue Asp105 is part of the active site.

Belongs to the phospholipase A2 family. Group II subfamily. D49 sub-subfamily. It depends on Ca(2+) as a cofactor. Expressed by the venom gland.

Its subcellular location is the secreted. It carries out the reaction a 1,2-diacyl-sn-glycero-3-phosphocholine + H2O = a 1-acyl-sn-glycero-3-phosphocholine + a fatty acid + H(+). Its function is as follows. Snake venom phospholipase A2 (PLA2) that exhibits high hydrolytic activities and shows strong preference for the anionic micelles (dPPC with deoxycholate) to the zwitterionic micelles (dPPC with Triton X-100). PLA2 catalyzes the calcium-dependent hydrolysis of the 2-acyl groups in 3-sn-phosphoglycerides. In Daboia russelii (Russel's viper), this protein is Acidic phospholipase A2 Drk-a1.